The following is a 327-amino-acid chain: Ferrochelatase (327 aa).

Positions 196 and 277 each coordinate Fe cation.

Belongs to the ferrochelatase family.

It localises to the cytoplasm. The enzyme catalyses heme b + 2 H(+) = protoporphyrin IX + Fe(2+). Its pathway is porphyrin-containing compound metabolism; protoheme biosynthesis; protoheme from protoporphyrin-IX: step 1/1. Catalyzes the ferrous insertion into protoporphyrin IX. This Gloeobacter violaceus (strain ATCC 29082 / PCC 7421) protein is Ferrochelatase.